The primary structure comprises 348 residues: Chaperone protein DnaJ (348 aa).

One can recognise a J domain in the interval 3–65 (DLYGILGVDH…EQRQRYDRHV (63 aa)). The CR-type zinc-finger motif lies at 109-191 (GGSQVVKIDS…CYGNGSRSAP (83 aa)). Residues Cys-122, Cys-125, Cys-139, Cys-142, Cys-165, Cys-168, Cys-179, and Cys-182 each contribute to the Zn(2+) site. CXXCXGXG motif repeat units lie at residues 122–129 (CDVCNGTR), 139–146 (CFDCNGSG), 165–172 (CSKCRGNG), and 179–186 (CRRCYGNG).

This sequence belongs to the DnaJ family. As to quaternary structure, homodimer. Requires Zn(2+) as cofactor.

It localises to the cytoplasm. Functionally, participates actively in the response to hyperosmotic and heat shock by preventing the aggregation of stress-denatured proteins and by disaggregating proteins, also in an autonomous, DnaK-independent fashion. Unfolded proteins bind initially to DnaJ; upon interaction with the DnaJ-bound protein, DnaK hydrolyzes its bound ATP, resulting in the formation of a stable complex. GrpE releases ADP from DnaK; ATP binding to DnaK triggers the release of the substrate protein, thus completing the reaction cycle. Several rounds of ATP-dependent interactions between DnaJ, DnaK and GrpE are required for fully efficient folding. Also involved, together with DnaK and GrpE, in the DNA replication of plasmids through activation of initiation proteins. This Tropheryma whipplei (strain Twist) (Whipple's bacillus) protein is Chaperone protein DnaJ.